The chain runs to 185 residues: Ribosome-recycling factor (185 aa).

The protein belongs to the RRF family.

It localises to the cytoplasm. Functionally, responsible for the release of ribosomes from messenger RNA at the termination of protein biosynthesis. May increase the efficiency of translation by recycling ribosomes from one round of translation to another. The chain is Ribosome-recycling factor from Nocardioides sp. (strain ATCC BAA-499 / JS614).